The sequence spans 274 residues: Large ribosomal subunit protein uL2 (274 aa).

Residues 221–274 (RGTAMNPVDHPHGGGEGRNFGKHPVTPWGVQTKGKKTRSNKRTDKFIVRRRSKK) are disordered.

Belongs to the universal ribosomal protein uL2 family. Part of the 50S ribosomal subunit. Forms a bridge to the 30S subunit in the 70S ribosome.

In terms of biological role, one of the primary rRNA binding proteins. Required for association of the 30S and 50S subunits to form the 70S ribosome, for tRNA binding and peptide bond formation. It has been suggested to have peptidyltransferase activity; this is somewhat controversial. Makes several contacts with the 16S rRNA in the 70S ribosome. This Yersinia enterocolitica protein is Large ribosomal subunit protein uL2.